Here is an 828-residue protein sequence, read N- to C-terminus: DNA gyrase subunit A (828 aa).

The Topo IIA-type catalytic domain occupies 32-497 (LPDVRDGLKP…EVLSLEDEDL (466 aa)). Tyrosine 120 functions as the O-(5'-phospho-DNA)-tyrosine intermediate in the catalytic mechanism. Residues 524-530 (QKRGGRG) carry the GyrA-box motif.

It belongs to the type II topoisomerase GyrA/ParC subunit family. As to quaternary structure, heterotetramer, composed of two GyrA and two GyrB chains. In the heterotetramer, GyrA contains the active site tyrosine that forms a transient covalent intermediate with DNA, while GyrB binds cofactors and catalyzes ATP hydrolysis.

The protein localises to the cytoplasm. The catalysed reaction is ATP-dependent breakage, passage and rejoining of double-stranded DNA.. In terms of biological role, a type II topoisomerase that negatively supercoils closed circular double-stranded (ds) DNA in an ATP-dependent manner to modulate DNA topology and maintain chromosomes in an underwound state. Negative supercoiling favors strand separation, and DNA replication, transcription, recombination and repair, all of which involve strand separation. Also able to catalyze the interconversion of other topological isomers of dsDNA rings, including catenanes and knotted rings. Type II topoisomerases break and join 2 DNA strands simultaneously in an ATP-dependent manner. This chain is DNA gyrase subunit A, found in Streptococcus pyogenes serotype M3 (strain ATCC BAA-595 / MGAS315).